The primary structure comprises 316 residues: MKIIFAGTPEFAAVALAALHAAGFEIPLVLTQPDRPAGRGMQLHASAVKQFALAHDIPVAQPVSLRLDGKYPEVAAEAHALLKATPHDVMVVAAYGLILPQSILDIPPRGCINIHASLLPRWRGAAPIHRAIESGDAETGVTIMQMELGLDTGPMLAMQRLPITADDTTASLHDKLATLGGEMIVQTLRRMEQGDLPAEPQPDGANYAAKILKEEATLDFTQPAEQLARKIRAFNPFPGAAATCDGTLIKFWHAQAVPASNQLPPGQVIAANPHDGVLVACGDGALRVTELQKPGGKRLSAVEFLKGFTLEDKRFQ.

Residue 117-120 coordinates (6S)-5,6,7,8-tetrahydrofolate; the sequence is SLLP.

The protein belongs to the Fmt family.

The enzyme catalyses L-methionyl-tRNA(fMet) + (6R)-10-formyltetrahydrofolate = N-formyl-L-methionyl-tRNA(fMet) + (6S)-5,6,7,8-tetrahydrofolate + H(+). Functionally, attaches a formyl group to the free amino group of methionyl-tRNA(fMet). The formyl group appears to play a dual role in the initiator identity of N-formylmethionyl-tRNA by promoting its recognition by IF2 and preventing the misappropriation of this tRNA by the elongation apparatus. This Janthinobacterium sp. (strain Marseille) (Minibacterium massiliensis) protein is Methionyl-tRNA formyltransferase.